The primary structure comprises 62 residues: Conotoxin TeAr151 (62 aa).

An N-terminal signal peptide occupies residues 1-22 (MRCLPVFVVLLLLIASAPSVDA). The propeptide occupies 23–47 (QPKTKDDVPLAPLHDNIQNTLQTLR). Methionine 55 is subject to Methionine sulfoxide; partial. At serine 60 the chain carries Serine amide.

The protein belongs to the conotoxin T superfamily. In terms of processing, contains 2 disulfide bonds. Contains 2 disulfide bonds that can be either 'C1-C3, C2-C4' or 'C1-C4, C2-C3', since these disulfide connectivities have been observed for conotoxins with cysteine framework V (for examples, see AC P0DQQ7 and AC P81755).. In terms of tissue distribution, expressed by the venom duct. Is mostly present in part 5 of the venom duct (distal part near the pharynx), and less abundantly present in part 4 of the venom duct.

It is found in the secreted. This chain is Conotoxin TeAr151, found in Conus textile (Cloth-of-gold cone).